Reading from the N-terminus, the 647-residue chain is MALISLTNGYLSFSDAPLLDHAELHIEPNECVCLVGRNGAGKSTLLKIIAGDVLMDDGKIQYEKDLVVSRLEQDPPRNAQGNIFDYVAEGVGHLTDLLKEYHQISVQLEENYSDQILSQLEQVQAKLEHADGWRFENKINEVLLKLGLNPNTKLSALSGGWLRKAALARALVCDPDVLLLDEPTNHLDVEAIEWLENFLLDFQGSIVFISHDRSFIRKMATRIVDLDRGQLVSYPGNYDLYLTTKEENLRVEALQNELFDKRLAQEEVWIRQGIKARRTRNEGRVRALKVMREERRQRRDVMGTAKLQLDTSSRSGKIVFEMEDVSYEIAGKTLLKDFSTTILRGDKIALVGPNGCGKTTFIKLLLGEIQPTSGKIRCGTKLEIAYFDQYRADLDPEKTVMDNVADGKQDIEINGVKRHVLGYLQDFLFPPKRAMTPVKALSGGERNRLLLAKLLLKPNNLLILDEPTNDLDVETLELLEEILTDYQGTLLIVSHDRQFIDNTATECYLFEGKGHLNKYVGGFFDAKQQQANFWASKAVEEQAKAKKSEPLKEESAVKNDRTSKPKSVKLSYKEQRELEQLPQLLEELETKITVLQAEIADPAFFQQAHDITDAKLKALADTEAELETAFLRWEELEEKKNLVEGKA.

2 consecutive ABC transporter domains span residues 1–253 and 320–546; these read MALI…RVEA and FEME…AKAK. ATP contacts are provided by residues 36–43 and 352–359; these read GRNGAGKS and GPNGCGKT. Over residues 545–563 the composition is skewed to basic and acidic residues; the sequence is AKKSEPLKEESAVKNDRTS. Positions 545-569 are disordered; that stretch reads AKKSEPLKEESAVKNDRTSKPKSVK. The segment at 559–647 is C-terminal domain (CTD), binds DNA; it reads NDRTSKPKSV…EKKNLVEGKA (89 aa).

Belongs to the ABC transporter superfamily. ABCF family. Uup subfamily.

The protein localises to the cytoplasm. The enzyme catalyses ATP + H2O = ADP + phosphate + H(+). In terms of biological role, probably plays a role in ribosome assembly or function. May be involved in resolution of branched DNA intermediates that result from template switching in postreplication gaps. Binds DNA and has ATPase activity. The chain is ATP-binding protein Uup from Haemophilus influenzae (strain ATCC 51907 / DSM 11121 / KW20 / Rd).